Reading from the N-terminus, the 94-residue chain is Large ribosomal subunit protein bL27 (94 aa).

A propeptide spanning residues 1–9 (MLELNLQLF) is cleaved from the precursor. A disordered region spans residues 12 to 33 (KKGGGSTSNGRDSQAKRLGAKA).

The protein belongs to the bacterial ribosomal protein bL27 family. Post-translationally, the N-terminus is cleaved by ribosomal processing cysteine protease Prp.

The polypeptide is Large ribosomal subunit protein bL27 (Lactococcus lactis subsp. cremoris (strain MG1363)).